A 515-amino-acid chain; its full sequence is Zinc-binding protein AdcA (515 aa).

The first 28 residues, 1–28, serve as a signal peptide directing secretion; the sequence is MKKKILLMMSLISVFFAWQLTQAKQVLA. His66 provides a ligand contact to Zn(2+). Positions 125 to 148 are disordered; it reads DHHHEDADKKHEHNKHSEEGHNHA. A his-rich loop region spans residues 129 to 148; the sequence is EDADKKHEHNKHSEEGHNHA. Zn(2+) is bound by residues His152, His216, and Glu291.

It belongs to the bacterial solute-binding protein 9 family.

Its function is as follows. Part of the ATP-binding cassette (ABC) transport system AdcABC involved in zinc import. Binds zinc with high affinity and specificity and delivers it to the membrane permease for translocation into the cytoplasm. The chain is Zinc-binding protein AdcA (adcA) from Streptococcus pyogenes serotype M6 (strain ATCC BAA-946 / MGAS10394).